Consider the following 396-residue polypeptide: L-lactate dehydrogenase (396 aa).

An FMN hydroxy acid dehydrogenase domain is found at 1–380 (MIISAASDYR…TQDSLVQGLG (380 aa)). Y24 provides a ligand contact to substrate. FMN-binding residues include S106 and Q127. Y129 is a substrate binding site. An FMN-binding site is contributed by T155. A substrate-binding site is contributed by R164. K251 is an FMN binding site. H275 (proton acceptor) is an active-site residue. R278 is a binding site for substrate. An FMN-binding site is contributed by 306 to 330 (DSGIRNGLDVVRMIALGADTVLLGR).

This sequence belongs to the FMN-dependent alpha-hydroxy acid dehydrogenase family. It depends on FMN as a cofactor.

The protein localises to the cell inner membrane. It carries out the reaction (S)-lactate + A = pyruvate + AH2. In terms of biological role, catalyzes the conversion of L-lactate to pyruvate. Is coupled to the respiratory chain. This Shigella dysenteriae serotype 1 (strain Sd197) protein is L-lactate dehydrogenase.